Reading from the N-terminus, the 380-residue chain is MKAWLQSSISYYTGTAEPVYGPEAIQPVTASVQGINPFHRLEADDFKWSTPSSSHVETQVFYIKPNEGDYMCFVQLIHSNLGSWTTTAQSTCRIFDLKHPENDLWTSTNMDQFSFENDKTSFVAKNCSVVLEDQKRYRIRASINMDSIIDITVHQDAPPFKIGEDGNSTYGTDPSKPWASMKHTFWPRTRVEGSIVARGRVVDVTGPGMFVHALQNGKPHHLASSWEFALLQHKKFTAIMMQFKTPPSYGSTIVNIGGIAMKDKIISATVDNTIEHVETTLDPDTEWHEPTRISYEWDGKDAETYTEDIHLSVDAPLGRRLQRIDVLAEIPSWLKGFVHGVSGTKPFIYQYFSPVKFTLKMGDEVIEDEATLFNETTFIS.

Positions Met-1–Pro-18 are peripherally associates with membranes.

Belongs to the SVF1 family.

The protein resides in the golgi apparatus. It is found in the cis-Golgi network membrane. It localises to the endoplasmic reticulum membrane. The protein localises to the cytoplasm. Its subcellular location is the nucleus. In terms of biological role, ceramide-binding protein that may transfer ceramides from the endoplasmic reticulum membrane to the cis-Golgi network membrane, and is thereby required for the biosynthesis of complex sphingolipids. The polypeptide is Ceramide-binding protein svf1 (Schizosaccharomyces pombe (strain 972 / ATCC 24843) (Fission yeast)).